We begin with the raw amino-acid sequence, 2077 residues long: MKIITSSTNQNDSKYGPRAGKQCMSNSFSFLHTVYLNGINNSLNAGTIDAIMEEGYHLDTAGTLALMLNNSDSQDYRLPTEIPKRIHSRYGVTQHELSRPFNGTLDTQKIDNEVYLGLIDFILYGKSKNGPTFAVITIGVLSRALFFLNNTLYLFDSHPTEREATAAIYICQNIEEVYELLTTHGTEGFYYDASLIFFIETSNLSLSSHDAELLILKTYKDPDIAIALDKFSSTEIHEIKKTDDIGSQQDLVADKTTDLEHAPHKRKKNSHSLELELNDKKKKDTASLTYYATEVDLIPSFYELRSQFQSLFHDLKSFPIMKSNFNWTIYLQDSPINPNQPFATPFLWNRVFHLLCQIIDVFVGVGSTNDDSSKQQQQTIFINYLLPFKDFSEVFNEALAACQENNLDIIFIYNNYLCKTTTFRTLERILLSKFLAIVDNDHKKHYEWVKSWTTQMFQGMPKKLDDIENYLKAYVDHNPVKHFHEFICLNKAEKYKVAVLLNEKRKEIQEAIEREKNSFAQLSNFIDKLGETPALPIESENVHKVHTSDITEGIVPRFITESIELPNISTLNNTQQISLDKQLNEKLTNTIHTLTNKFTKIVQDNYNNIAAGFMPVTELNCLFAYLVNLYFNIEVLKHSGLNINTVLLQEVEKLYDNTQFLRFGTSHFNINNLSNFTLSIRKMFVDFYNSQKPSDRASEILAAIESILADPSKNKTVVNIEMIKSQLEELGKMEISTTENKQTAAITKQILGDQELTPIYDFLHHLSAYNLPNTTTVKNLHLHFILEQRPDIAMTLHDKIQSILDIYVDDMLNDITVPEQTFSTVLFLVDLFPNSTEKTALFESVLTLRQLAKKCANLKTLDEFDDLAQFITTNSEQLQNMMRQHFGKKIPTLMGHIKFLYSQKIITTEEKNWIQRAKTVVITSPEELTAFLATAPTKHALQTCKPDLDKALQRHMEEQMKQTAENDKKHILTIRSTLEKRLTDILLILKDGQFSSLETMHLNLLETFLKQLQDNNVIIHFTHALLPVLKDIETTISKIISDVIEKILIKTPLNPEQMSKEEQKYTPLLSFLSKFKKTTFCTEDVKTEIEQVQKSITFLKKIATSTNKHTRLSHSIYGQELNLYEERITELRKETNKMKEQLSKEYALAEKKILLSSQDAKTDKIYLVLNTHTLKEIKNTQFKETAFAKALTVEVNNKENQLQELLNHFNAHLKAKMDQNHITKLSFDTKWTAFVSDSRLYIPDFINIKLQDFISDPFKVISQLMNKATNEMPYIQAEITLKWLTKLIHDINKFCLSAISEFGKEAIPFNYAALRDLEYQINTKYVEIENKVICNETVENTKNIPKLTKLLKQLDPKRVAGGQEQYQTLMNKILTSETSMQQTYEKEQLKKEYFEIVNNVASFKLAFNFPQQLQNVERLIEKFKSLPKSQPFEKFPQENDLLSDSLNTENYINGLRALLNFITAAQNYIQNTLLKQWAVFQQQNFIPIDYSVANVKPISDLYARLRIERERQVFYQVNSVFGTHLIVDDTGVPLQFHNIFNNAIVKFFSLNYKQINVPEDTPRLVSSQYKLLSVCKSFIMILQQFWENIITLDLGPYLRDGTQNFKRELIPIVNLKLFIYCITQAWTASEDSTVSTAFELPIKQFTLLILCSHPEYLYGCLSHSTDLVINSLAKSIDKNSLYNTFVVSHNPPEKPMHLMRNICIDTQLWQPAKLMKDTFQQTFFTQLCPKNEKFFIYLTAFLILPYKFMNYIWIQYKPAIFTQRSYQNLIKDLCSEYVHQNKITTSSVTPHEPDTIKSGERITSKITVHKAQNTPTLTRLQAQEYVFDYILYSFLTGYEMTFAMYIDIIEKTYLLCMRHLENVLHDKDFQSVLRARTFDIDYILKQSWTKNIVEHSLFSVQLDKIVSYLNHTNRATPNIPLILFNYDNEVVNVYLPPMSTNPKKVAFYIKNPFHFPVQEYEATNLISFHLYPKTTDILNQLPPNNTESTRPGKQTSETLTNKNLSEPKFKKPAVTGLMPKSQSIILSTDTNVPETSPDVKANTASAAIKDVTLAREKINEFSESINTTISKLKSMYL.

Residues 1–231 are deubiquitination activity; that stretch reads MKIITSSTNQ…PDIAIALDKF (231 aa). A Peptidase C76 domain is found at 3–221; that stretch reads IITSSTNQND…ELLILKTYKD (219 aa). Active-site residues include Cys23, Asp156, and His158. A region of interest (interaction with inner tegument protein) is located at residue Ser287. The interval 1982-2004 is disordered; the sequence is PPNNTESTRPGKQTSETLTNKNL.

The protein belongs to the herpesviridae large tegument protein family. As to quaternary structure, interacts with host CUL1 and CUL4A; these interactions inhibit the E3 ligase activity of cullins. Interacts with inner tegument protein. Interacts with capsid vertex specific component CVC2. Interacts with the major capsid protein/MCP.

It is found in the virion tegument. Its subcellular location is the host cytoplasm. The protein localises to the host nucleus. It carries out the reaction Thiol-dependent hydrolysis of ester, thioester, amide, peptide and isopeptide bonds formed by the C-terminal Gly of ubiquitin (a 76-residue protein attached to proteins as an intracellular targeting signal).. Its function is as follows. Large tegument protein that plays multiple roles in the viral cycle. During viral entry, remains associated with the capsid while most of the tegument is detached and participates in the capsid transport toward the host nucleus. Plays a role in the routing of the capsid at the nuclear pore complex and subsequent uncoating. Within the host nucleus, acts as a deneddylase and promotes the degradation of nuclear CRLs (cullin-RING ubiquitin ligases) and thereby stabilizes nuclear CRL substrates, while cytoplasmic CRLs remain unaffected. These modifications prevent host cell cycle S-phase progression and create a favorable environment allowing efficient viral genome replication. Participates later in the secondary envelopment of capsids. Indeed, plays a linker role for the association of the outer viral tegument to the capsids together with the inner tegument protein. In Homo sapiens (Human), this protein is Large tegument protein deneddylase (U31).